Here is a 259-residue protein sequence, read N- to C-terminus: MQQMVPASGYDRAITIFSPEGRLYQVEYAREAVRRGTTAVGIKCKDGVVLAVDRRITSKLIDVSSIEKIFQIDDHIVAATSGLVADARVLIDRARLEAQMNRISYGEAITVEALAKKICDIKQAYTQHGGARPFGLALLITGIDRHSARLFETDPSGALIEYKATAIGSGRPIAMEVLESKYSEDMTVNEGMELALYALSKTTEELKPENIDMAIVKDSGKLVEKISVDEIEKIVKAVYKKVEAEEAEAEKNKGEEDIE.

It belongs to the peptidase T1A family. As to quaternary structure, the 20S proteasome core is composed of 14 alpha and 14 beta subunits that assemble into four stacked heptameric rings, resulting in a barrel-shaped structure. The two inner rings, each composed of seven catalytic beta subunits, are sandwiched by two outer rings, each composed of seven alpha subunits. The catalytic chamber with the active sites is on the inside of the barrel. Has a gated structure, the ends of the cylinder being occluded by the N-termini of the alpha-subunits. Is capped at one or both ends by the proteasome regulatory ATPase, PAN.

It localises to the cytoplasm. The formation of the proteasomal ATPase PAN-20S proteasome complex, via the docking of the C-termini of PAN into the intersubunit pockets in the alpha-rings, triggers opening of the gate for substrate entry. Interconversion between the open-gate and close-gate conformations leads to a dynamic regulation of the 20S proteasome proteolysis activity. In terms of biological role, component of the proteasome core, a large protease complex with broad specificity involved in protein degradation. In Methanococcus maripaludis (strain C5 / ATCC BAA-1333), this protein is Proteasome subunit alpha.